The chain runs to 524 residues: FAD-dependent monooxygenase opdD (524 aa).

The FAD site is built by Glu-48 and Arg-145.

This sequence belongs to the paxM FAD-dependent monooxygenase family.

The protein operates within secondary metabolite biosynthesis. FAD-dependent monooxygenase; part of the gene cluster that mediates the biosynthesis of oxopyrrolidines, polyketide-amino acid hybrid compounds with feature structures of tetramic acid. Does not seem to play a role in oxopyrrolidines A and B biosynthesis. May be involved in further modifications of these oxopyrrolidines. This chain is FAD-dependent monooxygenase opdD, found in Penicillium oxalicum (strain 114-2 / CGMCC 5302) (Penicillium decumbens).